The following is a 180-amino-acid chain: Acireductone dioxygenase (180 aa).

4 residues coordinate Fe(2+): His88, His90, Glu94, and His133. Ni(2+) contacts are provided by His88, His90, Glu94, and His133.

It belongs to the acireductone dioxygenase (ARD) family. Monomer. Interacts with MMP14. Requires Fe(2+) as cofactor. It depends on Ni(2+) as a cofactor.

It is found in the cytoplasm. Its subcellular location is the nucleus. The protein resides in the cell membrane. The enzyme catalyses 1,2-dihydroxy-5-(methylsulfanyl)pent-1-en-3-one + O2 = 4-methylsulfanyl-2-oxobutanoate + formate + 2 H(+). It catalyses the reaction 1,2-dihydroxy-5-(methylsulfanyl)pent-1-en-3-one + O2 = 3-(methylsulfanyl)propanoate + CO + formate + 2 H(+). The protein operates within amino-acid biosynthesis; L-methionine biosynthesis via salvage pathway; L-methionine from S-methyl-5-thio-alpha-D-ribose 1-phosphate: step 5/6. Catalyzes 2 different reactions between oxygen and the acireductone 1,2-dihydroxy-3-keto-5-methylthiopentene (DHK-MTPene) depending upon the metal bound in the active site. Fe-containing acireductone dioxygenase (Fe-ARD) produces formate and 2-keto-4-methylthiobutyrate (KMTB), the alpha-ketoacid precursor of methionine in the methionine recycle pathway. Ni-containing acireductone dioxygenase (Ni-ARD) produces methylthiopropionate, carbon monoxide and formate, and does not lie on the methionine recycle pathway. The chain is Acireductone dioxygenase from Gallus gallus (Chicken).